The following is a 1004-amino-acid chain: Phyllocladan-16-alpha-ol synthase (1004 aa).

The DXDD motif signature appears at 321–324; it reads DADD. 6 residues coordinate Mg(2+): Asp667, Glu671, Asn872, Asp873, Ser876, and Asp880. The short motif at 667–671 is the DEXXE motif element; sequence DEFME.

It belongs to the terpene synthase family. Mg(2+) is required as a cofactor.

It catalyses the reaction (2E,6E,10E)-geranylgeranyl diphosphate = (+)-copalyl diphosphate. It carries out the reaction (+)-copalyl diphosphate + H2O = phyllocladan-16alpha-ol + diphosphate. Involved in the synthesis of labdane-related hydrocarbons by catalyzing the conversion of geranylgeranyl diphosphate (GGDP) to phyllocladan-16-alpha-ol in a two step via type B cyclization into a (+)-copalyl diphosphate ((+)-CDP) intermediate. This chain is Phyllocladan-16-alpha-ol synthase (PaDC1), found in Phomopsis amygdali (Fusicoccum amygdali).